We begin with the raw amino-acid sequence, 202 residues long: dITP/XTP pyrophosphatase (202 aa).

7-12 contributes to the substrate binding site; that stretch reads SRNEAK. The Proton acceptor role is filled by aspartate 68. Aspartate 68 lines the Mg(2+) pocket. Substrate-binding positions include serine 69, 156–159, lysine 179, and 184–185; these read FGYD and HR.

Belongs to the HAM1 NTPase family. Homodimer. The cofactor is Mg(2+).

The catalysed reaction is XTP + H2O = XMP + diphosphate + H(+). The enzyme catalyses dITP + H2O = dIMP + diphosphate + H(+). It catalyses the reaction ITP + H2O = IMP + diphosphate + H(+). Its function is as follows. Pyrophosphatase that catalyzes the hydrolysis of nucleoside triphosphates to their monophosphate derivatives, with a high preference for the non-canonical purine nucleotides XTP (xanthosine triphosphate), dITP (deoxyinosine triphosphate) and ITP. Seems to function as a house-cleaning enzyme that removes non-canonical purine nucleotides from the nucleotide pool, thus preventing their incorporation into DNA/RNA and avoiding chromosomal lesions. In Frankia alni (strain DSM 45986 / CECT 9034 / ACN14a), this protein is dITP/XTP pyrophosphatase.